Consider the following 372-residue polypeptide: Glutamate 5-kinase (372 aa).

ATP is bound at residue lysine 14. Serine 54, aspartate 141, and asparagine 153 together coordinate substrate. ATP contacts are provided by residues 173–174 (TD) and 215–221 (TGGMLTK). The region spanning 280 to 358 (AGRLVLDDGA…RDIERLLGYV (79 aa)) is the PUA domain.

Belongs to the glutamate 5-kinase family.

The protein localises to the cytoplasm. It catalyses the reaction L-glutamate + ATP = L-glutamyl 5-phosphate + ADP. It functions in the pathway amino-acid biosynthesis; L-proline biosynthesis; L-glutamate 5-semialdehyde from L-glutamate: step 1/2. Its function is as follows. Catalyzes the transfer of a phosphate group to glutamate to form L-glutamate 5-phosphate. The chain is Glutamate 5-kinase from Laribacter hongkongensis (strain HLHK9).